We begin with the raw amino-acid sequence, 673 residues long: MHSRSCLPPLLLLLLVLLGSGVQGCPSGCQCNQPQTVFCTARQGTTVPRDVPPDTVGLYIFENGITTLDVGCFAGLPGLQLLDLSQNQITSLPGGIFQPLVNLSNLDLTANKLHEISNETFRGLRRLERLYLGKNRIRHIQPGAFDALDRLLELKLPDNELRVLPPLHLPRLLLLDLSHNSIPALEAGILDTANVEALRLAGLGLRQLDEGLFGRLLNLHDLDVSDNQLEHMPSVIQGLRGLTRLRLAGNTRIAQIRPEDLAGLTALQELDVSNLSLQALPSDLSSLFPRLRLLAAARNPFNCLCPLSWFGPWVRENHVVLASPEETRCHFPPKNAGRLLLDLDYADFGCPVTTTTATVPTIRSTIREPTLSTSSQAPTWPSLTEPTTQASTVLSTAPPTMRPAPQPQDCPASICLNGGSCRLGARHHWECLCPEGFIGLYCESPVEQGMKPSSIPDTPRPPPLLPLSIEPVSPTSLRVKLQRYLQGNTVQLRSLRLTYRNLSGPDKRLVTLRLPASLAEYTVTQLRPNATYSICVTPLGAGRTPEGEEACGEANTSQAVRSNHAPVTQAREGNLPLLIAPALAAVLLAVLAAAGAAYCVRRARATSTAQDKGQVGPGTGPLELEGVKAPLEPGSKATEGGGEALSGGPECEVPLMGYPGPSLQGVLPAKHYI.

The first 24 residues, 1–24, serve as a signal peptide directing secretion; the sequence is MHSRSCLPPLLLLLLVLLGSGVQG. Positions 25-53 constitute an LRRNT domain; that stretch reads CPSGCQCNQPQTVFCTARQGTTVPRDVPP. At 25 to 576 the chain is on the extracellular side; that stretch reads CPSGCQCNQP…VTQAREGNLP (552 aa). 10 LRR repeats span residues 54–75, 78–99, 102–123, 126–147, 150–170, 171–192, 194–215, 218–239, 241–265, and 266–288; these read DTVGLYIFENGITTLDVGCFAG, GLQLLDLSQNQITSLPGGIFQP, NLSNLDLTANKLHEISNETFRG, RLERLYLGKNRIRHIQPGAFDA, RLLELKLPDNELRVLPPLHLP, RLLLLDLSHNSIPALEAGILDT, NVEALRLAGLGLRQLDEGLFGR, NLHDLDVSDNQLEHMPSVIQGL, GLTRLRLAGNTRIAQIRPEDLAGLT, and ALQELDVSNLSLQALPSDLSSLF. N-linked (GlcNAc...) asparagine glycans are attached at residues N102 and N118. N274 carries an N-linked (GlcNAc...) asparagine glycan. Residues 299-352 form the LRRCT domain; the sequence is NPFNCLCPLSWFGPWVRENHVVLASPEETRCHFPPKNAGRLLLDLDYADFGCPV. Residues 369–389 are disordered; the sequence is PTLSTSSQAPTWPSLTEPTTQ. Residues 370-389 show a composition bias toward polar residues; the sequence is TLSTSSQAPTWPSLTEPTTQ. One can recognise an EGF-like domain in the interval 406–443; that stretch reads QPQDCPASICLNGGSCRLGARHHWECLCPEGFIGLYCE. Disulfide bonds link C410/C421, C415/C431, and C433/C442. Residues 463 to 559 enclose the Fibronectin type-III domain; it reads PLLPLSIEPV…ACGEANTSQA (97 aa). N-linked (GlcNAc...) asparagine glycosylation is found at N501, N529, and N555. A helical transmembrane segment spans residues 577–597; it reads LLIAPALAAVLLAVLAAAGAA. Residues 598 to 673 lie on the Cytoplasmic side of the membrane; the sequence is YCVRRARATS…QGVLPAKHYI (76 aa). The segment at 608 to 648 is disordered; sequence TAQDKGQVGPGTGPLELEGVKAPLEPGSKATEGGGEALSGG.

Interacts with TGFB1, TGFB2 and TGFB3. In terms of processing, N-glycosylated.

It is found in the membrane. In terms of biological role, may act as an inhibitor of TGF-beta signaling. This Mus musculus (Mouse) protein is Vasorin (Vasn).